A 372-amino-acid chain; its full sequence is Cobalt-precorrin-5B C(1)-methyltransferase (372 aa).

It belongs to the CbiD family.

The catalysed reaction is Co-precorrin-5B + S-adenosyl-L-methionine = Co-precorrin-6A + S-adenosyl-L-homocysteine. Its pathway is cofactor biosynthesis; adenosylcobalamin biosynthesis; cob(II)yrinate a,c-diamide from sirohydrochlorin (anaerobic route): step 6/10. In terms of biological role, catalyzes the methylation of C-1 in cobalt-precorrin-5B to form cobalt-precorrin-6A. The sequence is that of Cobalt-precorrin-5B C(1)-methyltransferase from Prochlorococcus marinus subsp. pastoris (strain CCMP1986 / NIES-2087 / MED4).